A 98-amino-acid polypeptide reads, in one-letter code: NADH-ubiquinone oxidoreductase chain 4L (98 aa).

3 helical membrane passes run P2–F22, S29–L49, and I61–V81.

The protein belongs to the complex I subunit 4L family. Core subunit of respiratory chain NADH dehydrogenase (Complex I) which is composed of 45 different subunits.

Its subcellular location is the mitochondrion inner membrane. The enzyme catalyses a ubiquinone + NADH + 5 H(+)(in) = a ubiquinol + NAD(+) + 4 H(+)(out). Core subunit of the mitochondrial membrane respiratory chain NADH dehydrogenase (Complex I) which catalyzes electron transfer from NADH through the respiratory chain, using ubiquinone as an electron acceptor. Part of the enzyme membrane arm which is embedded in the lipid bilayer and involved in proton translocation. This Microcebus mamiratra (Claire's mouse lemur) protein is NADH-ubiquinone oxidoreductase chain 4L (MT-ND4L).